A 234-amino-acid polypeptide reads, in one-letter code: Large ribosomal subunit protein uL1c (234 aa).

Belongs to the universal ribosomal protein uL1 family. In terms of assembly, part of the 50S ribosomal subunit.

The protein localises to the plastid. It localises to the chloroplast. Binds directly to 23S rRNA. Might be involved in E site tRNA release (Potential). The polypeptide is Large ribosomal subunit protein uL1c (rpl1) (Guillardia theta (Cryptophyte)).